The following is a 338-amino-acid chain: Lipoate-protein ligase A (338 aa).

Residues 29 to 216 (PADQRVLFLW…AYCEHYQQQV (188 aa)) form the BPL/LPL catalytic domain. Residues Arg-71, 76–79 (GAVF), and Lys-134 each bind ATP. Lys-134 is a (R)-lipoate binding site.

Belongs to the LplA family. Monomer.

It localises to the cytoplasm. It catalyses the reaction L-lysyl-[lipoyl-carrier protein] + (R)-lipoate + ATP = N(6)-[(R)-lipoyl]-L-lysyl-[lipoyl-carrier protein] + AMP + diphosphate + H(+). Its pathway is protein modification; protein lipoylation via exogenous pathway; protein N(6)-(lipoyl)lysine from lipoate: step 1/2. It functions in the pathway protein modification; protein lipoylation via exogenous pathway; protein N(6)-(lipoyl)lysine from lipoate: step 2/2. In terms of biological role, catalyzes both the ATP-dependent activation of exogenously supplied lipoate to lipoyl-AMP and the transfer of the activated lipoyl onto the lipoyl domains of lipoate-dependent enzymes. The protein is Lipoate-protein ligase A of Vibrio cholerae serotype O1 (strain ATCC 39541 / Classical Ogawa 395 / O395).